The primary structure comprises 325 residues: uncharacterized protein (325 aa).

It belongs to the mgp1/MG371 family.

This is an uncharacterized protein from Mycoplasma pneumoniae (strain ATCC 29342 / M129 / Subtype 1) (Mycoplasmoides pneumoniae).